A 178-amino-acid chain; its full sequence is Small ribosomal subunit protein uS4 (178 aa).

Residues 104 to 166 (RRLQTMVYKK…PNSPMASENH (63 aa)) form the S4 RNA-binding domain. Residues 157-178 (PNSPMASENHPERTAAVSEENQ) form a disordered region.

This sequence belongs to the universal ribosomal protein uS4 family. In terms of assembly, part of the 30S ribosomal subunit. Contacts protein S5. The interaction surface between S4 and S5 is involved in control of translational fidelity.

Its function is as follows. One of the primary rRNA binding proteins, it binds directly to 16S rRNA where it nucleates assembly of the body of the 30S subunit. Functionally, with S5 and S12 plays an important role in translational accuracy. The chain is Small ribosomal subunit protein uS4 from Methanococcus maripaludis (strain C7 / ATCC BAA-1331).